Here is a 559-residue protein sequence, read N- to C-terminus: Glucose-6-phosphate isomerase (559 aa).

Residue E352 is the Proton donor of the active site. Residues H383 and K511 contribute to the active site.

This sequence belongs to the GPI family.

The protein resides in the cytoplasm. The enzyme catalyses alpha-D-glucose 6-phosphate = beta-D-fructose 6-phosphate. It functions in the pathway carbohydrate biosynthesis; gluconeogenesis. The protein operates within carbohydrate degradation; glycolysis; D-glyceraldehyde 3-phosphate and glycerone phosphate from D-glucose: step 2/4. Catalyzes the reversible isomerization of glucose-6-phosphate to fructose-6-phosphate. In Chlorobaculum tepidum (strain ATCC 49652 / DSM 12025 / NBRC 103806 / TLS) (Chlorobium tepidum), this protein is Glucose-6-phosphate isomerase.